The primary structure comprises 407 residues: Peptidase T (407 aa).

His-82 lines the Zn(2+) pocket. Asp-84 is a catalytic residue. Asp-143 is a Zn(2+) binding site. The active-site Proton acceptor is the Glu-177. Zn(2+) contacts are provided by Glu-178, Asp-200, and His-382.

Belongs to the peptidase M20B family. It depends on Zn(2+) as a cofactor.

The protein localises to the cytoplasm. The catalysed reaction is Release of the N-terminal residue from a tripeptide.. Functionally, cleaves the N-terminal amino acid of tripeptides. This is Peptidase T from Streptococcus pyogenes serotype M3 (strain ATCC BAA-595 / MGAS315).